The following is an 85-amino-acid chain: Small ribosomal subunit protein eS27 (85 aa).

The C4-type zinc finger occupies 38-60; sequence CHGCRTITTVFSHAQNVVICSSC.

The protein belongs to the eukaryotic ribosomal protein eS27 family. Requires Zn(2+) as cofactor.

In Dictyostelium discoideum (Social amoeba), this protein is Small ribosomal subunit protein eS27 (rps27).